The following is a 621-amino-acid chain: Stimulated by retinoic acid gene 6 protein-like (621 aa).

The Extracellular segment spans residues 1–21 (MLAASTRTRQINITCDNPVDR). Asparagine 12 carries N-linked (GlcNAc...) asparagine glycosylation. The chain crosses the membrane as a helical span at residues 22–42 (EVFLHYSLIPSLCIILVLSFL). Over 43-53 (QRREHRRQRDD) the chain is Cytoplasmic. Residues 54 to 74 (TSYLLGNHFGIIVPLDFVGTF) traverse the membrane as a helical segment. The Extracellular portion of the chain corresponds to 75–110 (SNRWSYGAAFGATANKVMFLFSEGYQPLTVPQWAQA). A helical transmembrane segment spans residues 111–131 (FVLFIGGMEVGLSYFPFFACL). Topologically, residues 132–137 (SSEFQL) are cytoplasmic. A helical transmembrane segment spans residues 138 to 158 (VSSILGFSYSLTWFVVTVLQI). Over 159–173 (SQCPHGQFLGRFETL) the chain is Extracellular. The helical transmembrane segment at 174-194 (VFYWPSLLCLGFLLGRFLHMF) threads the bilayer. At 195–258 (LKALPVHLGL…CFQFPSRMVG (64 aa)) the chain is on the cytoplasmic side. Residues 259–279 (TLLLAFICLYLFIVIEFCVFL) traverse the membrane as a helical segment. Residues 280–321 (HVRDKLDMFEDKLESYLTHMNETGTLTPIILQVKELISVTKG) lie on the Extracellular side of the membrane. The chain crosses the membrane as a helical span at residues 322-342 (VWVVTILPAALTCVTYLFHIL). The Cytoplasmic portion of the chain corresponds to 343-383 (ACYRKHMKRLWAGDKHFLPQKFHSPSSAASVVAIARYSGWQ). The chain crosses the membrane as a helical span at residues 384–404 (IAYILWGYLIIHVVQSLCGVM). Topologically, residues 405 to 424 (LMYGLVLPIIHHRGLEMLQG) are extracellular. A helical transmembrane segment spans residues 425–445 (FGLGVLTLSIVVGLIILQVWI). The Cytoplasmic portion of the chain corresponds to 446-476 (AGTFFLQPKLGTSDKQKPLALNNRRAFHNFN). The helical transmembrane segment at 477–497 (YFLFFYNVLLGLGACLSRLLI) threads the bilayer. Over 498–621 (SCLLGTWLIA…TQILLTCSDC (124 aa)) the chain is Extracellular. A Phosphothreonine modification is found at threonine 612.

Post-translationally, glycosylated. In terms of tissue distribution, highly expressed in liver and small intestine. Also expressed in spleen, kidney, colon, stomach, placenta, adipose tissue and isolated adipocytes.

Its subcellular location is the cell membrane. Functionally, acts as a high-affinity cell-surface receptor for retinol-binding protein RBP4 and mediates RBP4-dependent retinol uptake in the liver. The sequence is that of Stimulated by retinoic acid gene 6 protein-like from Mus musculus (Mouse).